Reading from the N-terminus, the 128-residue chain is ATP synthase epsilon chain (128 aa).

Belongs to the ATPase epsilon chain family. As to quaternary structure, F-type ATPases have 2 components, CF(1) - the catalytic core - and CF(0) - the membrane proton channel. CF(1) has five subunits: alpha(3), beta(3), gamma(1), delta(1), epsilon(1). CF(0) has three main subunits: a, b and c.

The protein localises to the cell inner membrane. In terms of biological role, produces ATP from ADP in the presence of a proton gradient across the membrane. This chain is ATP synthase epsilon chain, found in Sulfurovum sp. (strain NBC37-1).